A 108-amino-acid polypeptide reads, in one-letter code: Holo-[acyl-carrier-protein] synthase (108 aa).

Mg(2+) is bound by residues aspartate 9 and glutamate 52.

The protein belongs to the P-Pant transferase superfamily. AcpS family. Mg(2+) is required as a cofactor.

The protein resides in the cytoplasm. It catalyses the reaction apo-[ACP] + CoA = holo-[ACP] + adenosine 3',5'-bisphosphate + H(+). Functionally, transfers the 4'-phosphopantetheine moiety from coenzyme A to a Ser of acyl-carrier-protein. The chain is Holo-[acyl-carrier-protein] synthase from Coprothermobacter proteolyticus (strain ATCC 35245 / DSM 5265 / OCM 4 / BT).